A 130-amino-acid chain; its full sequence is MAQVQFYGTGRRKNAVARVYLVPGEGKVVVNNKEVLDYFGRKTLDMVVRQPLELTNTTGRFDVLVKVVGGGVSGQAGATRHGLARALVQADPNLRPVLKRAGFLTRDPRMKERRKYGLKKARRAPQFSKR.

Residues 108–130 (PRMKERRKYGLKKARRAPQFSKR) form a disordered region. The span at 111–130 (KERRKYGLKKARRAPQFSKR) shows a compositional bias: basic residues.

This sequence belongs to the universal ribosomal protein uS9 family.

The chain is Small ribosomal subunit protein uS9 from Desulforamulus reducens (strain ATCC BAA-1160 / DSM 100696 / MI-1) (Desulfotomaculum reducens).